Here is a 413-residue protein sequence, read N- to C-terminus: Probable cysteine desulfurase (413 aa).

N6-(pyridoxal phosphate)lysine is present on Lys-229. Cys-368 (cysteine persulfide intermediate) is an active-site residue.

The protein belongs to the class-V pyridoxal-phosphate-dependent aminotransferase family. Csd subfamily. Pyridoxal 5'-phosphate serves as cofactor.

It catalyses the reaction (sulfur carrier)-H + L-cysteine = (sulfur carrier)-SH + L-alanine. Catalyzes the removal of elemental sulfur and selenium atoms from L-cysteine, L-cystine, L-selenocysteine, and L-selenocystine to produce L-alanine. This Staphylococcus aureus (strain COL) protein is Probable cysteine desulfurase (csd).